The following is a 309-amino-acid chain: Aspartate carbamoyltransferase catalytic subunit (309 aa).

Carbamoyl phosphate is bound by residues arginine 55 and threonine 56. L-aspartate is bound at residue lysine 85. Carbamoyl phosphate is bound by residues arginine 106, histidine 135, and glutamine 138. Positions 168 and 230 each coordinate L-aspartate. 2 residues coordinate carbamoyl phosphate: leucine 268 and proline 269.

The protein belongs to the aspartate/ornithine carbamoyltransferase superfamily. ATCase family. Heterododecamer (2C3:3R2) of six catalytic PyrB chains organized as two trimers (C3), and six regulatory PyrI chains organized as three dimers (R2).

The catalysed reaction is carbamoyl phosphate + L-aspartate = N-carbamoyl-L-aspartate + phosphate + H(+). Its pathway is pyrimidine metabolism; UMP biosynthesis via de novo pathway; (S)-dihydroorotate from bicarbonate: step 2/3. Catalyzes the condensation of carbamoyl phosphate and aspartate to form carbamoyl aspartate and inorganic phosphate, the committed step in the de novo pyrimidine nucleotide biosynthesis pathway. The sequence is that of Aspartate carbamoyltransferase catalytic subunit from Vibrio cholerae serotype O1 (strain ATCC 39315 / El Tor Inaba N16961).